The following is a 440-amino-acid chain: MKLAYWMYTGPAHIGTLRIASSFKNVHAIMHAPLGDDYFNVMRSMLERERNYTPVTTSVVDRNVLARGSQEKVIDNILRKDKEEQPDLIVLTPTCTSSILQEDLQNFVEQASLNSMADVLLADVNHYRINELQACDKTLEQIVRFYIEKNRASLTLEKVKTLLPSVNLIGISSLGFHNNHDTRELKKLFELYEIILNCSLPQGTTVKTLINLPKAWLNILPYRELGLLTSKYLNKEFGLLSLVILPMGNINLNRFLKKLLFSLKLENNTITKVINIKLLKLLNLNWIKKEAIKSKLKRKKAIIFGSSNHVATLTKLLSKEIGLEIILCGTYCKSESKWFSEQVQNYCNKILITEDHTMISNEISKLKPDVIFGTQMERHIGKRLGIPCGVISSPIHIQNFPLSYKPMVGYEGVKTIMDLLFNSLNLKDRKNSFTLFNEII.

Asp-36 contributes to the [4Fe-4S] cluster binding site. 427-428 (KD) lines the substrate pocket.

Belongs to the ChlB/BchB/BchZ family. Protochlorophyllide reductase is composed of three subunits; ChlL, ChlN and ChlB. Forms a heterotetramer of two ChlB and two ChlN subunits. The cofactor is [4Fe-4S] cluster.

It localises to the plastid. The protein localises to the cyanelle. The enzyme catalyses chlorophyllide a + oxidized 2[4Fe-4S]-[ferredoxin] + 2 ADP + 2 phosphate = protochlorophyllide a + reduced 2[4Fe-4S]-[ferredoxin] + 2 ATP + 2 H2O. The protein operates within porphyrin-containing compound metabolism; chlorophyll biosynthesis (light-independent). Functionally, component of the dark-operative protochlorophyllide reductase (DPOR) that uses Mg-ATP and reduced ferredoxin to reduce ring D of protochlorophyllide (Pchlide) to form chlorophyllide a (Chlide). This reaction is light-independent. The NB-protein (ChlN-ChlB) is the catalytic component of the complex. This Cyanophora paradoxa protein is Light-independent protochlorophyllide reductase subunit B.